Reading from the N-terminus, the 417-residue chain is Acetate kinase (417 aa).

Asparagine 7 is a Mg(2+) binding site. Lysine 14 contacts ATP. Arginine 104 lines the substrate pocket. The active-site Proton donor/acceptor is aspartate 162. Residues 222–226 (HLGNG), 297–299 (DMR), and 346–350 (GIGEN) contribute to the ATP site. Position 401 (glutamate 401) interacts with Mg(2+).

This sequence belongs to the acetokinase family. As to quaternary structure, homodimer. Mg(2+) is required as a cofactor. It depends on Mn(2+) as a cofactor.

Its subcellular location is the cytoplasm. It carries out the reaction acetate + ATP = acetyl phosphate + ADP. It functions in the pathway metabolic intermediate biosynthesis; acetyl-CoA biosynthesis; acetyl-CoA from acetate: step 1/2. Its function is as follows. Catalyzes the formation of acetyl phosphate from acetate and ATP. Can also catalyze the reverse reaction. The sequence is that of Acetate kinase from Chloroherpeton thalassium (strain ATCC 35110 / GB-78).